The following is a 165-amino-acid chain: MAKEYSFDISAKIDMQSFKNAINLVDKEVANRYDFKGTTYEVDYKEKDKLLVMVASSDNKLDALKDIVITKLLKQNLSSKVLEEQKTENSSGNNRKVTFKIVDYIESKEAKKIAAEIKNLKLKVTAQIEGDSIRVKGAKLDDLQKVIATIRSMEWEAPLVFENMR.

The protein belongs to the YajQ family.

Nucleotide-binding protein. In Sulfurimonas denitrificans (strain ATCC 33889 / DSM 1251) (Thiomicrospira denitrificans (strain ATCC 33889 / DSM 1251)), this protein is Nucleotide-binding protein Suden_0039.